Here is a 330-residue protein sequence, read N- to C-terminus: MSTASAFATNVPSFVNASSLKKSSTSSARSGVLSAKFTCNSSSSSSSATPPSLIRNEPVFAAPAPIITPNWTEDGNESYEEAIDALKKMLIEKGELEPVAAARIDQITAQAAAPDTKAPFDPVERIKSGFVKFKTEKFVTNPALYDELAKGQSPKFMVFACSDSRVCPSHVLDFQPGEAFVVRNVANMVPPFDKTKYSGVGAAVEYAVLHLKVQEIFVIGHSRCGGIKGLMTFPDEGPHSTDFIEDWVKVCLPAKSKVVAEHNGTHLDDQCVLCEKEAVNVSLGNLLTYPFVRDGLRNNTLALKGGHYDFVNGTFELWALDFGLSSPTSV.

A chloroplast transit peptide-like region spans residues 1–109 (MSTASAFATN…AAARIDQITA (109 aa)).

It belongs to the beta-class carbonic anhydrase family.

The protein resides in the cytoplasm. The enzyme catalyses hydrogencarbonate + H(+) = CO2 + H2O. In terms of biological role, reversible hydration of carbon dioxide. This chain is Carbonic anhydrase, found in Flaveria brownii (Brown's yellowtops).